A 954-amino-acid polypeptide reads, in one-letter code: Glycine dehydrogenase (decarboxylating) (954 aa).

The residue at position 706 (Lys706) is an N6-(pyridoxal phosphate)lysine.

It belongs to the GcvP family. The glycine cleavage system is composed of four proteins: P, T, L and H. It depends on pyridoxal 5'-phosphate as a cofactor.

It carries out the reaction N(6)-[(R)-lipoyl]-L-lysyl-[glycine-cleavage complex H protein] + glycine + H(+) = N(6)-[(R)-S(8)-aminomethyldihydrolipoyl]-L-lysyl-[glycine-cleavage complex H protein] + CO2. The glycine cleavage system catalyzes the degradation of glycine. The P protein binds the alpha-amino group of glycine through its pyridoxal phosphate cofactor; CO(2) is released and the remaining methylamine moiety is then transferred to the lipoamide cofactor of the H protein. The chain is Glycine dehydrogenase (decarboxylating) from Pseudomonas savastanoi pv. phaseolicola (strain 1448A / Race 6) (Pseudomonas syringae pv. phaseolicola (strain 1448A / Race 6)).